A 119-amino-acid polypeptide reads, in one-letter code: uncharacterized protein (119 aa).

The interval 86 to 119 is disordered; that stretch reads KKQRMKMLTEQEEEEEEEEEEPPKPKKKVINRKK. Over residues 95–106 the composition is skewed to acidic residues; sequence EQEEEEEEEEEE. The segment covering 110–119 has biased composition (basic residues); it reads PKKKVINRKK.

This is an uncharacterized protein from Sputnik virophage.